Here is a 343-residue protein sequence, read N- to C-terminus: Tetraacyldisaccharide 4'-kinase (343 aa).

51-58 is an ATP binding site; it reads HGGGAGKT.

Belongs to the LpxK family.

The enzyme catalyses a lipid A disaccharide + ATP = a lipid IVA + ADP + H(+). It functions in the pathway glycolipid biosynthesis; lipid IV(A) biosynthesis; lipid IV(A) from (3R)-3-hydroxytetradecanoyl-[acyl-carrier-protein] and UDP-N-acetyl-alpha-D-glucosamine: step 6/6. Its function is as follows. Transfers the gamma-phosphate of ATP to the 4'-position of a tetraacyldisaccharide 1-phosphate intermediate (termed DS-1-P) to form tetraacyldisaccharide 1,4'-bis-phosphate (lipid IVA). This is Tetraacyldisaccharide 4'-kinase from Rhodopseudomonas palustris (strain BisB18).